Reading from the N-terminus, the 80-residue chain is uncharacterized protein (80 aa).

This is an uncharacterized protein from Lepidoptera (butterflies and moths).